Reading from the N-terminus, the 89-residue chain is MLTDLECAINSLIDVYHKYSLKKGNYHAVYRDDLKQLLETECPKFMKKKDADTWFKELDINQDGGINFEEFLVLVIKVGLEAHEEIHKE.

2 EF-hand domains span residues 12 to 47 (LIDV…KFMK) and 46 to 81 (MKKK…VGLE). Zn(2+)-binding residues include His-17 and His-27. Asp-33 provides a ligand contact to Ca(2+). An S-nitrosocysteine modification is found at Cys-42. 4 residues coordinate Ca(2+): Asp-59, Asn-61, Asp-63, and Glu-70. His-83 provides a ligand contact to Zn(2+).

Belongs to the S-100 family. As to quaternary structure, homodimer. Preferentially exists as a heterodimer or heterotetramer with S100A9 known as calprotectin (S100A8/A9). S100A8 interacts with AGER, ATP2A2 and with the heterodimeric complex formed by TLR4 and LY96. Calprotectin (S100A8/9) interacts with CEACAM3 and tubulin filaments in a calcium-dependent manner. Heterotetrameric calprotectin (S100A8/A9) interacts with ANXA6 and associates with tubulin filaments in activated monocytes. S100A8 and calprotectin (S100A8/9) interact with NCF2/P67PHOX, RAC1 and RAC2. Calprotectin (S100A8/9) interacts with CYBA and CYBB. Calprotectin (S100A8/9) interacts with NOS2 to form the iNOS-S100A8/A9 transnitrosylase complex. Calprotectin (S100A8/9) interacts with CD69. In terms of tissue distribution, found essentially in phagocytic cells.

The protein resides in the secreted. The protein localises to the cytoplasm. It localises to the cytoskeleton. Its subcellular location is the cell membrane. Functionally, S100A8 is a calcium- and zinc-binding protein which plays a prominent role in the regulation of inflammatory processes and immune response. It can induce neutrophil chemotaxis and adhesion. Predominantly found as calprotectin (S100A8/A9) which has a wide plethora of intra- and extracellular functions. The intracellular functions include: facilitating leukocyte arachidonic acid trafficking and metabolism, modulation of the tubulin-dependent cytoskeleton during migration of phagocytes and activation of the neutrophilic NADPH-oxidase. Also participates in regulatory T-cell differentiation together with CD69. Activates NADPH-oxidase by facilitating the enzyme complex assembly at the cell membrane, transferring arachidonic acid, an essential cofactor, to the enzyme complex and S100A8 contributes to the enzyme assembly by directly binding to NCF2/P67PHOX. The extracellular functions involve pro-inflammatory, antimicrobial, oxidant-scavenging and apoptosis-inducing activities. Its pro-inflammatory activity includes recruitment of leukocytes, promotion of cytokine and chemokine production, and regulation of leukocyte adhesion and migration. Acts as an alarmin or a danger associated molecular pattern (DAMP) molecule and stimulates innate immune cells via binding to pattern recognition receptors such as Toll-like receptor 4 (TLR4) and receptor for advanced glycation endproducts (AGER). Binding to TLR4 and AGER activates the MAP-kinase and NF-kappa-B signaling pathways resulting in the amplification of the pro-inflammatory cascade. Has antimicrobial activity towards bacteria and fungi and exerts its antimicrobial activity probably via chelation of Zn(2+) which is essential for microbial growth. Can induce cell death via autophagy and apoptosis and this occurs through the cross-talk of mitochondria and lysosomes via reactive oxygen species (ROS) and the process involves BNIP3. Can regulate neutrophil number and apoptosis by an anti-apoptotic effect; regulates cell survival via ITGAM/ITGB and TLR4 and a signaling mechanism involving MEK-ERK. Its role as an oxidant scavenger has a protective role in preventing exaggerated tissue damage by scavenging oxidants. The iNOS-S100A8/A9 transnitrosylase complex is proposed to direct selective inflammatory stimulus-dependent S-nitrosylation of multiple targets such as GAPDH, ANXA5, EZR, MSN and VIM by recognizing a [IL]-x-C-x-x-[DE] motif; S100A8 seems to contribute to S-nitrosylation site selectivity. The protein is Protein S100-A8 (S100A8) of Bos taurus (Bovine).